The following is a 130-amino-acid chain: Sec-independent protein translocase protein TatB (130 aa).

A helical membrane pass occupies residues 1 to 21; sequence MFDISFTELIVIGIVALVVIG. Residues 70–130 form a disordered region; it reads VDSFQNSVHS…TPKEPRQSGS (61 aa). Composition is skewed to basic and acidic residues over residues 80–89 and 96–111; these read EINKIQETAD and PEKE…KTEP.

This sequence belongs to the TatB family. As to quaternary structure, the Tat system comprises two distinct complexes: a TatABC complex, containing multiple copies of TatA, TatB and TatC subunits, and a separate TatA complex, containing only TatA subunits. Substrates initially bind to the TatABC complex, which probably triggers association of the separate TatA complex to form the active translocon.

It is found in the cell inner membrane. In terms of biological role, part of the twin-arginine translocation (Tat) system that transports large folded proteins containing a characteristic twin-arginine motif in their signal peptide across membranes. Together with TatC, TatB is part of a receptor directly interacting with Tat signal peptides. TatB may form an oligomeric binding site that transiently accommodates folded Tat precursor proteins before their translocation. In Nitrosomonas eutropha (strain DSM 101675 / C91 / Nm57), this protein is Sec-independent protein translocase protein TatB.